Reading from the N-terminus, the 529-residue chain is Cytochrome P450 monooxygenase 136 (529 aa).

The chain crosses the membrane as a helical span at residues 9-29; that stretch reads SPLALAVLSIATCQLALVWWY. Residue cysteine 447 coordinates heme.

The protein belongs to the cytochrome P450 family. It depends on heme as a cofactor.

The protein localises to the membrane. Its pathway is secondary metabolite biosynthesis. Cytochrome P450 monooxygenase that is able to use delta(6)-protoilludene as a substrate to produce delta(6)-protoilludene-5-ol. In Postia placenta (strain ATCC 44394 / Madison 698-R) (Brown rot fungus), this protein is Cytochrome P450 monooxygenase 136.